A 339-amino-acid polypeptide reads, in one-letter code: Anthranilate phosphoribosyltransferase (339 aa).

5-phospho-alpha-D-ribose 1-diphosphate-binding positions include G79, 82–83, S87, 89–92, 107–115, and A119; these read GD, NIST, and KHGNRAASS. Anthranilate is bound at residue G79. S91 is a Mg(2+) binding site. N110 is an anthranilate binding site. An anthranilate-binding site is contributed by R165. Residues D224 and E225 each contribute to the Mg(2+) site.

The protein belongs to the anthranilate phosphoribosyltransferase family. Homodimer. It depends on Mg(2+) as a cofactor.

The catalysed reaction is N-(5-phospho-beta-D-ribosyl)anthranilate + diphosphate = 5-phospho-alpha-D-ribose 1-diphosphate + anthranilate. It functions in the pathway amino-acid biosynthesis; L-tryptophan biosynthesis; L-tryptophan from chorismate: step 2/5. Functionally, catalyzes the transfer of the phosphoribosyl group of 5-phosphorylribose-1-pyrophosphate (PRPP) to anthranilate to yield N-(5'-phosphoribosyl)-anthranilate (PRA). This is Anthranilate phosphoribosyltransferase from Lactiplantibacillus plantarum (strain ATCC BAA-793 / NCIMB 8826 / WCFS1) (Lactobacillus plantarum).